The sequence spans 497 residues: Vacuolar-processing enzyme beta-isozyme 1 (497 aa).

Positions 1–23 (MAARCWVWGFVVALLAVAAAADG) are cleaved as a signal peptide. N153 is a glycosylation site (N-linked (GlcNAc...) asparagine). H180 is a catalytic residue. The active-site Nucleophile is C222. A disulfide bridge connects residues C255 and C269. N340 is a glycosylation site (N-linked (GlcNAc...) asparagine). Intrachain disulfides connect C432/C462 and C444/C479.

The protein belongs to the peptidase C13 family. In terms of processing, auto-catalytic activation.

The protein localises to the protein storage vacuole. It carries out the reaction Hydrolysis of proteins and small molecule substrates at -Asn-|-Xaa- bonds.. Its function is as follows. Asparagine-specific endopeptidase that may be involved in processing of proteins targeted to vacuoles. Cysteine protease required for post-translational proteolysis of seed storage proteins in the protein storage vacuole (PSV) of developing seeds, by processing of proglutelin precursor to mature glutelin subunits, thus contributing to the formation of protein crystalline structures in PSV. This Oryza sativa subsp. indica (Rice) protein is Vacuolar-processing enzyme beta-isozyme 1.